The chain runs to 283 residues: Protein BASIC PENTACYSTEINE1 (283 aa).

The segment at 111–170 (RFEENPIPPPAPCEEQTGKKRKMRGSIATPTVPKAKKMRKPKEERDVTNNNVQQQQQRVK) is disordered. Low complexity predominate over residues 158 to 169 (TNNNVQQQQQRV).

The protein belongs to the BBR/BPC family. As to expression, expressed in seedlings, leaves and pistils. Detected in the base of flowers and tips of carpels, in leaf and sepal vasculature, in young rosette, in the lateral and tip of primary roots, and in the whole ovule.

It localises to the nucleus. Functionally, transcriptional regulator that specifically binds to GA-rich elements (GAGA-repeats) present in regulatory sequences of genes involved in developmental processes. Negatively regulates the homeotic gene AGL11/STK, which controls ovule primordium identity, by a cooperative binding to purine-rich elements present in the regulatory sequence leading to DNA conformational changes. This is Protein BASIC PENTACYSTEINE1 (BPC1) from Arabidopsis thaliana (Mouse-ear cress).